The sequence spans 252 residues: Glycine-rich cell wall structural protein 1.0 (252 aa).

Positions 1–30 (MATSKVLLSNVLFVFVCFGICSAARTLLTL) are cleaved as a signal peptide. The interval 231–252 (GSGYGGGGGSGEGGGHGGGYYP) is disordered.

As to expression, expressed in young hypocotyls.

Its subcellular location is the secreted. It localises to the cell wall. Its function is as follows. Responsible for plasticity of the cell wall. The chain is Glycine-rich cell wall structural protein 1.0 from Phaseolus vulgaris (Kidney bean).